The primary structure comprises 337 residues: Outer membrane protein assembly factor BamC (337 aa).

Positions 1-16 (MKKWLFPFAFVATLAG) are cleaved as a signal peptide. Residue cysteine 17 is the site of N-palmitoyl cysteine attachment. Residue cysteine 17 is the site of S-diacylglycerol cysteine attachment.

The protein belongs to the BamC family. Part of the Bam complex.

The protein localises to the cell outer membrane. Its function is as follows. Part of the outer membrane protein assembly complex, which is involved in assembly and insertion of beta-barrel proteins into the outer membrane. This Pasteurella multocida (strain Pm70) protein is Outer membrane protein assembly factor BamC.